Here is a 466-residue protein sequence, read N- to C-terminus: ATP-dependent protease ATPase subunit HslU (466 aa).

Residues Ile18, 60-65, Asp279, Glu344, and Arg416 contribute to the ATP site; that span reads GVGKTE.

Belongs to the ClpX chaperone family. HslU subfamily. In terms of assembly, a double ring-shaped homohexamer of HslV is capped on each side by a ring-shaped HslU homohexamer. The assembly of the HslU/HslV complex is dependent on binding of ATP.

It localises to the cytoplasm. Its function is as follows. ATPase subunit of a proteasome-like degradation complex; this subunit has chaperone activity. The binding of ATP and its subsequent hydrolysis by HslU are essential for unfolding of protein substrates subsequently hydrolyzed by HslV. HslU recognizes the N-terminal part of its protein substrates and unfolds these before they are guided to HslV for hydrolysis. The chain is ATP-dependent protease ATPase subunit HslU from Lactobacillus acidophilus (strain ATCC 700396 / NCK56 / N2 / NCFM).